A 206-amino-acid chain; its full sequence is Large ribosomal subunit protein uL4 (206 aa).

The disordered stretch occupies residues asparagine 47–aspartate 94. Over residues alanine 49 to lysine 58 the composition is skewed to basic and acidic residues. Over residues serine 59–alanine 74 the composition is skewed to basic residues.

This sequence belongs to the universal ribosomal protein uL4 family. In terms of assembly, part of the 50S ribosomal subunit.

In terms of biological role, one of the primary rRNA binding proteins, this protein initially binds near the 5'-end of the 23S rRNA. It is important during the early stages of 50S assembly. It makes multiple contacts with different domains of the 23S rRNA in the assembled 50S subunit and ribosome. Its function is as follows. Forms part of the polypeptide exit tunnel. The protein is Large ribosomal subunit protein uL4 of Laribacter hongkongensis (strain HLHK9).